We begin with the raw amino-acid sequence, 205 residues long: ATP synthase subunit b (205 aa).

The helical transmembrane segment at 51-69 (FAWRCLDFAVLLAIVVWAL) threads the bilayer.

Belongs to the ATPase B chain family. As to quaternary structure, F-type ATPases have 2 components, F(1) - the catalytic core - and F(0) - the membrane proton channel. F(1) has five subunits: alpha(3), beta(3), gamma(1), delta(1), epsilon(1). F(0) has three main subunits: a(1), b(2) and c(10-14). The alpha and beta chains form an alternating ring which encloses part of the gamma chain. F(1) is attached to F(0) by a central stalk formed by the gamma and epsilon chains, while a peripheral stalk is formed by the delta and b chains.

It is found in the cell inner membrane. Functionally, f(1)F(0) ATP synthase produces ATP from ADP in the presence of a proton or sodium gradient. F-type ATPases consist of two structural domains, F(1) containing the extramembraneous catalytic core and F(0) containing the membrane proton channel, linked together by a central stalk and a peripheral stalk. During catalysis, ATP synthesis in the catalytic domain of F(1) is coupled via a rotary mechanism of the central stalk subunits to proton translocation. Its function is as follows. Component of the F(0) channel, it forms part of the peripheral stalk, linking F(1) to F(0). The polypeptide is ATP synthase subunit b (Geotalea uraniireducens (strain Rf4) (Geobacter uraniireducens)).